The following is a 1653-amino-acid chain: Clathrin heavy chain (1653 aa).

The segment at 1 to 483 (MSDLPIEFTE…FDTTLALACY (483 aa)) is globular terminal domain. WD40-like repeat regions lie at residues 23-66 (FLDF…KNMG), 67-107 (GDSA…LDEP), 108-152 (VIFW…ANLN), 153-198 (NTQI…QAID), 199-263 (GHVA…PDAT), 264-307 (NDFP…ITAE), and 308-336 (SVFT…VEIS). The tract at residues 453–469 (EKWLKEDKLECSEELGD) is binding site for the uncoating ATPase, involved in lattice disassembly. A flexible linker region spans residues 484-527 (LRAGAHAKVISCLAELQQFEKIIPYCQKVGYQPNFLVLISSLIR). Positions 528 to 1653 (SSPDRASEFA…SAMNVQPTGF (1126 aa)) are heavy chain arm. 7 CHCR repeats span residues 543-689 (NPET…QTVV), 692-834 (ATKF…DEAF), 839-978 (LQSV…QLID), 985-1130 (IPEL…IPDA), 1134-1275 (YIKA…FKLA), 1280-1426 (LNLI…SLLV), and 1429-1572 (LTSL…REGF). Lysine 1107 participates in a covalent cross-link: Glycyl lysine isopeptide (Lys-Gly) (interchain with G-Cter in ubiquitin). Residues 1219-1528 (AARLCYSAVS…LLYRRNKKWA (310 aa)) are involved in binding clathrin light chain.

Belongs to the clathrin heavy chain family. As to quaternary structure, clathrin triskelions, composed of 3 heavy chains and 3 light chains, are the basic subunits of the clathrin coat. Interacts with the auxilin-like clathrin uncoating factor SWA2. Interacts with INP53.

It is found in the cytoplasmic vesicle membrane. It localises to the membrane. The protein localises to the coated pit. Its function is as follows. Clathrin is the major protein of the polyhedral coat of coated pits and vesicles. In yeast, it is involved in the retention of proteins in an intracellular membrane compartment, presumably the trans-Golgi. The chain is Clathrin heavy chain (CHC1) from Saccharomyces cerevisiae (strain ATCC 204508 / S288c) (Baker's yeast).